A 207-amino-acid chain; its full sequence is ATP synthase subunit b 2 (207 aa).

Residues 1–31 (MVAQAAPPAGTAGQGTHEAASAAHGAAAAHG) are compositionally biased toward low complexity. Residues 1–41 (MVAQAAPPAGTAGQGTHEAASAAHGAAAAHGAAEEGHGKKS) are disordered. Residues 48–70 (ATTFASQLLWLVLSFGLLYLLMS) form a helical membrane-spanning segment.

The protein belongs to the ATPase B chain family. F-type ATPases have 2 components, F(1) - the catalytic core - and F(0) - the membrane proton channel. F(1) has five subunits: alpha(3), beta(3), gamma(1), delta(1), epsilon(1). F(0) has three main subunits: a(1), b(2) and c(10-14). The alpha and beta chains form an alternating ring which encloses part of the gamma chain. F(1) is attached to F(0) by a central stalk formed by the gamma and epsilon chains, while a peripheral stalk is formed by the delta and b chains.

It is found in the cell inner membrane. In terms of biological role, f(1)F(0) ATP synthase produces ATP from ADP in the presence of a proton or sodium gradient. F-type ATPases consist of two structural domains, F(1) containing the extramembraneous catalytic core and F(0) containing the membrane proton channel, linked together by a central stalk and a peripheral stalk. During catalysis, ATP synthesis in the catalytic domain of F(1) is coupled via a rotary mechanism of the central stalk subunits to proton translocation. Component of the F(0) channel, it forms part of the peripheral stalk, linking F(1) to F(0). The sequence is that of ATP synthase subunit b 2 from Xanthobacter autotrophicus (strain ATCC BAA-1158 / Py2).